The sequence spans 366 residues: NADH-quinone oxidoreductase subunit D (366 aa).

Belongs to the complex I 49 kDa subunit family. As to quaternary structure, NDH-1 is composed of 14 different subunits. Subunits NuoB, C, D, E, F, and G constitute the peripheral sector of the complex.

Its subcellular location is the cell membrane. It catalyses the reaction a quinone + NADH + 5 H(+)(in) = a quinol + NAD(+) + 4 H(+)(out). Functionally, NDH-1 shuttles electrons from NADH, via FMN and iron-sulfur (Fe-S) centers, to quinones in the respiratory chain. The immediate electron acceptor for the enzyme in this species is believed to be a menaquinone. Couples the redox reaction to proton translocation (for every two electrons transferred, four hydrogen ions are translocated across the cytoplasmic membrane), and thus conserves the redox energy in a proton gradient. The chain is NADH-quinone oxidoreductase subunit D from Geobacillus thermodenitrificans (strain NG80-2).